We begin with the raw amino-acid sequence, 212 residues long: Large ribosomal subunit protein uL3 (212 aa).

The segment covering 140-155 has biased composition (polar residues); sequence SVSHRAIGSTGQNQSP. The segment at 140-166 is disordered; it reads SVSHRAIGSTGQNQSPGKVFKGKKMPG. Residue Q153 is modified to N5-methylglutamine.

It belongs to the universal ribosomal protein uL3 family. Part of the 50S ribosomal subunit. Forms a cluster with proteins L14 and L19. Methylated by PrmB.

In terms of biological role, one of the primary rRNA binding proteins, it binds directly near the 3'-end of the 23S rRNA, where it nucleates assembly of the 50S subunit. The polypeptide is Large ribosomal subunit protein uL3 (Psychrobacter cryohalolentis (strain ATCC BAA-1226 / DSM 17306 / VKM B-2378 / K5)).